A 225-amino-acid polypeptide reads, in one-letter code: Biosynthetic peptidoglycan transglycosylase (225 aa).

Residues 9 to 29 traverse the membrane as a helical segment; the sequence is LLIFIGAILLIQLWIFSSLVW.

Belongs to the glycosyltransferase 51 family.

It is found in the cell inner membrane. It catalyses the reaction [GlcNAc-(1-&gt;4)-Mur2Ac(oyl-L-Ala-gamma-D-Glu-L-Lys-D-Ala-D-Ala)](n)-di-trans,octa-cis-undecaprenyl diphosphate + beta-D-GlcNAc-(1-&gt;4)-Mur2Ac(oyl-L-Ala-gamma-D-Glu-L-Lys-D-Ala-D-Ala)-di-trans,octa-cis-undecaprenyl diphosphate = [GlcNAc-(1-&gt;4)-Mur2Ac(oyl-L-Ala-gamma-D-Glu-L-Lys-D-Ala-D-Ala)](n+1)-di-trans,octa-cis-undecaprenyl diphosphate + di-trans,octa-cis-undecaprenyl diphosphate + H(+). The protein operates within cell wall biogenesis; peptidoglycan biosynthesis. Its function is as follows. Peptidoglycan polymerase that catalyzes glycan chain elongation from lipid-linked precursors. This Acinetobacter baumannii (strain SDF) protein is Biosynthetic peptidoglycan transglycosylase.